The chain runs to 603 residues: Protein SHORT-ROOT 2 (603 aa).

Disordered stretches follow at residues 11 to 58 (HHHH…HSHS) and 106 to 140 (DFSS…SSAG). Low complexity predominate over residues 31–44 (SYPSSRGSTSSPSS). A compositionally biased stretch (basic residues) spans 45–58 (HHTHNHTYYHHSHS). Over residues 108-125 (SSSSSSRQFHSGTGAPSS) the composition is skewed to low complexity. A GRAS domain is found at 179–602 (AAPSSSGRWA…QPVVWASAWK (424 aa)). Residues 186 to 249 (RWAAQLLMEC…LTTSGPRTLR (64 aa)) form a leucine repeat I (LRI) region. Residues 268–354 (ALKFQELSPW…DTPHLSITTV (87 aa)) form a VHIID region. The short motif at 318–322 (LHILD) is the VHIID element. The segment at 370-406 (EIGQRLEKFARLMGVPFSFRAVHHAGDLADLDLAALD) is leucine repeat II (LRII). The tract at residues 416–514 (LAVNCVNALR…ERAVGRAIVD (99 aa)) is PFYRE. The segment at 517–602 (SCPASQSAER…QPVVWASAWK (86 aa)) is SAW.

It belongs to the GRAS family. As to quaternary structure, does not interact with SCR1.

The protein resides in the nucleus. In terms of biological role, putative transcription factor involved in asymmetric cell division. The polypeptide is Protein SHORT-ROOT 2 (SHR2) (Oryza sativa subsp. indica (Rice)).